A 188-amino-acid polypeptide reads, in one-letter code: Elongation factor P (188 aa).

This sequence belongs to the elongation factor P family.

The protein localises to the cytoplasm. It participates in protein biosynthesis; polypeptide chain elongation. Its function is as follows. Involved in peptide bond synthesis. Stimulates efficient translation and peptide-bond synthesis on native or reconstituted 70S ribosomes in vitro. Probably functions indirectly by altering the affinity of the ribosome for aminoacyl-tRNA, thus increasing their reactivity as acceptors for peptidyl transferase. The protein is Elongation factor P of Methylobacterium radiotolerans (strain ATCC 27329 / DSM 1819 / JCM 2831 / NBRC 15690 / NCIMB 10815 / 0-1).